The sequence spans 74 residues: Small ribosomal subunit protein bS18 (74 aa).

Belongs to the bacterial ribosomal protein bS18 family. As to quaternary structure, part of the 30S ribosomal subunit. Forms a tight heterodimer with protein bS6.

Its function is as follows. Binds as a heterodimer with protein bS6 to the central domain of the 16S rRNA, where it helps stabilize the platform of the 30S subunit. This Chlorobaculum tepidum (strain ATCC 49652 / DSM 12025 / NBRC 103806 / TLS) (Chlorobium tepidum) protein is Small ribosomal subunit protein bS18.